Here is a 156-residue protein sequence, read N- to C-terminus: Ribosomal RNA large subunit methyltransferase H (156 aa).

S-adenosyl-L-methionine is bound by residues leucine 73, glycine 104, and 123–128 (LSSLTL).

This sequence belongs to the RNA methyltransferase RlmH family. As to quaternary structure, homodimer.

The protein localises to the cytoplasm. The enzyme catalyses pseudouridine(1915) in 23S rRNA + S-adenosyl-L-methionine = N(3)-methylpseudouridine(1915) in 23S rRNA + S-adenosyl-L-homocysteine + H(+). Its function is as follows. Specifically methylates the pseudouridine at position 1915 (m3Psi1915) in 23S rRNA. This chain is Ribosomal RNA large subunit methyltransferase H, found in Neisseria meningitidis serogroup A / serotype 4A (strain DSM 15465 / Z2491).